The chain runs to 107 residues: MSDDATIPITIEFSGGLEILFANQKKYNLSLPTKDESGEPATVAFLVRYLCDHIMKDPRKELFVLDDTVRPGILVLINEADWELEGEDKYQVQKDDHIMFVSTLHGG.

Gly107 bears the 1-thioglycine mark. Gly107 participates in a covalent cross-link: Glycyl lysine isopeptide (Gly-Lys) (interchain with K-? in acceptor proteins).

The protein belongs to the URM1 family. Post-translationally, C-terminal thiocarboxylation occurs in 2 steps, it is first acyl-adenylated (-COAMP) via the hesA/moeB/thiF part of UBA4, then thiocarboxylated (-COSH) via the rhodanese domain of UBA4.

Its subcellular location is the cytoplasm. It participates in tRNA modification; 5-methoxycarbonylmethyl-2-thiouridine-tRNA biosynthesis. Acts as a sulfur carrier required for 2-thiolation of mcm(5)S(2)U at tRNA wobble positions of cytosolic tRNA(Lys), tRNA(Glu) and tRNA(Gln). Serves as sulfur donor in tRNA 2-thiolation reaction by being thiocarboxylated (-COSH) at its C-terminus by the MOCS3 homolog UBA4. The sulfur is then transferred to tRNA to form 2-thiolation of mcm(5)S(2)U. Prior mcm(5) tRNA modification by the elongator complex is required for 2-thiolation. Also acts as a ubiquitin-like protein (UBL) that is covalently conjugated via an isopeptide bond to lysine residues of target proteins such as AHP1. The thiocarboxylated form serves as substrate for conjugation and oxidative stress specifically induces the formation of UBL-protein conjugates. This chain is Ubiquitin-related modifier 1 (urm1), found in Pyrenophora tritici-repentis (strain Pt-1C-BFP) (Wheat tan spot fungus).